A 416-amino-acid polypeptide reads, in one-letter code: MNFFLYFRTIFLIQLYFFNYSTFGCSASSTSVQSDTTNQVSVSCPKYTTIYTSGTSPDTKTIYPESTSTKSITTSTQSHSSPVIVVSTVGTVTETTISGSTEYTTTIPAEGITSGTVEIVEPTAGTVTETITSGTLPFTTTLAQASGTVSGTVEIVSPKNNPTTVYSGTVATTETFSSSTVVVIPTAICDGVRGLEYAVYDYTISSSMNEFCYPKNGQTDVFAFNEPAYFGSSDLDQSSPLFTGVFSSTDDIPEWASSWYLPPYPPQASDMASTYCACKVIVYQFFLRIPETDTYTLVVNNVDDVFFGWFGDKAISGWSNNNFDAYSYWHESPNMGLGTVGMGNFTVGNYPEGYFLPVRFVVANGAYIGGFDFYFTSDSTGPLATTSYSYTKTCTQQFLPFGQGNGGVNGPTEKLS.

Positions 1-27 (MNFFLYFRTIFLIQLYFFNYSTFGCSA) are cleaved as a signal peptide. Residue Asn19 is glycosylated (N-linked (GlcNAc...) asparagine). 2 consecutive repeat copies span residues 90 to 124 (GTVTETTISGSTEYTTTIPAEGITSGTVEIVEPTA) and 125 to 160 (GTVTETITSGTLPFTTTLAQASGTVSGTVEIVSPKN). A 2 X 36 AA approximate tandem repeats region spans residues 90–160 (GTVTETTISG…GTVEIVSPKN (71 aa)). A PA14 domain is found at 224 to 390 (FNEPAYFGSS…GPLATTSYSY (167 aa)). N-linked (GlcNAc...) asparagine glycosylation is present at Asn344.

The protein localises to the cell surface. In terms of biological role, may be involved in agglutination during conjugation or other aspects of colony formation. The chain is Putative cell agglutination protein SPAC1348.08c from Schizosaccharomyces pombe (strain 972 / ATCC 24843) (Fission yeast).